The following is a 469-amino-acid chain: Ufm1-specific protease 2 (469 aa).

Position 1 is an N-acetylmethionine (methionine 1). Catalysis depends on residues cysteine 302, aspartate 426, and histidine 428.

It belongs to the peptidase C78 family.

The protein resides in the endoplasmic reticulum. Its subcellular location is the cytoplasm. It localises to the nucleus. Thiol-dependent isopeptidase that specifically cleaves UFM1, a ubiquitin-like modifier protein, from conjugated proteins, such as CD274/PD-L1, CYB5R3, DDRGK1, MRE11, RPL26/uL24, TRIP4 and RPL26/uL24. While it is also able to mediate the processing of UFM1 precursors, a prerequisite for conjugation reactions, UFSP2 mainly acts as a protein deUFMylase that mediates deconjugation of UFM1 from target proteins. Mediates deUFMylation of RPL26/uL24, a critical step to release the UFM1 ribosome E3 ligase (UREL) complex during the recycling of 60S ribosome subunits from the endoplasmic reticulum. Catalyzes deUFMylation of TRIP4, regulating intracellular nuclear receptors transactivation and thereby regulate cell proliferation and differentiation. The chain is Ufm1-specific protease 2 from Pongo abelii (Sumatran orangutan).